The following is a 389-amino-acid chain: Acetyl-CoA:oxalate CoA-transferase (389 aa).

Residue H237 is part of the active site.

Homodimer.

The enzyme catalyses oxalate + acetyl-CoA = oxalyl-CoA + acetate. Involved in the catabolism of oxalate and in the adapatation to low pH. ACOCT serves to prime the oxalate-induced acid tolerance response (ATR) cycle by producing substrate for oxalyl-CoA decarboxylase (OXC) and formyl-coenzyme A transferase (FCOCT). Catalyzes the reversible conversion of acetyl-CoA and oxalate to oxalyl-CoA and acetate. It can also use formyl-CoA and oxalate to produce oxalyl-CoA and formate with significantly reduced specific activity. The protein is Acetyl-CoA:oxalate CoA-transferase (uctC) of Acetobacter aceti.